The primary structure comprises 576 residues: Acyl-CoA ligase sidI (576 aa).

The short motif at 3–11 (PVTTKTIRP) is the PTS2-type peroxisomal targeting signal element. The ATP site is built by Asp439, Arg454, and Lys553.

It belongs to the ATP-dependent AMP-binding enzyme family.

Its subcellular location is the peroxisome. The protein operates within siderophore biosynthesis. Functionally, acyl-CoA ligase; part of the gene cluster that mediates the biosynthesis of at least 11 siderophores, including beauverichelin A, dimerumic acid (DA), Na-dimethyl coprogen (NADC), eleutherazine B, ferricrocin (FC), fusarinine A, fusarinine C (FsC), metachelin A, mevalonolactone, rhodotorulic acid (RA) and tenellin. This cocktail of siderophores for iron metabolism is essential for virulence, and more specifically for the fungal virulence in penetrating through the host cuticle. Siderophore synthesis is also involved in conidial germination under iron-deficient conditions. For biosynthesis of fusarinine C, the transacylase SIDF transfers anhydromevalonyl to N(5)-hydroxyornithine. The required anhydromevalonyl-CoA moiety is derived from mevalonate by CoA ligation and dehydration catalyzed by SIDI and sidH respectively. The sequence is that of Acyl-CoA ligase sidI from Beauveria bassiana (strain ARSEF 2860) (White muscardine disease fungus).